Reading from the N-terminus, the 206-residue chain is Sperm acrosome developmental regulator (206 aa).

The tract at residues 180–206 (RRHHVRCHAAPRPNPAQSLKLDAQSPL) is disordered.

As to expression, expressed in sperm (at protein level).

It localises to the cytoplasmic vesicle. The protein resides in the secretory vesicle. It is found in the acrosome. Functionally, may play a role in acrosome formation and nucleus shaping during spermiogenesis. This is Sperm acrosome developmental regulator from Homo sapiens (Human).